A 163-amino-acid polypeptide reads, in one-letter code: CDP-archaeol synthase (163 aa).

Helical transmembrane passes span 4-24 (LLLG…APFI), 52-72 (LLLS…FLGI), 75-95 (IIIG…GAFI), 107-127 (APIL…ISFN), and 128-148 (VNLN…LHMF).

The protein belongs to the CDP-archaeol synthase family. It depends on Mg(2+) as a cofactor.

The protein localises to the cell membrane. The catalysed reaction is 2,3-bis-O-(geranylgeranyl)-sn-glycerol 1-phosphate + CTP + H(+) = CDP-2,3-bis-O-(geranylgeranyl)-sn-glycerol + diphosphate. Its pathway is membrane lipid metabolism; glycerophospholipid metabolism. In terms of biological role, catalyzes the formation of CDP-2,3-bis-(O-geranylgeranyl)-sn-glycerol (CDP-archaeol) from 2,3-bis-(O-geranylgeranyl)-sn-glycerol 1-phosphate (DGGGP) and CTP. This reaction is the third ether-bond-formation step in the biosynthesis of archaeal membrane lipids. The chain is CDP-archaeol synthase from Sulfolobus acidocaldarius (strain ATCC 33909 / DSM 639 / JCM 8929 / NBRC 15157 / NCIMB 11770).